Here is a 342-residue protein sequence, read N- to C-terminus: Protein-glutamate methylesterase/protein-glutamine glutaminase 3 (342 aa).

The Response regulatory domain maps to 3–120 (RVLVVEDMPT…SPGFADDARR (118 aa)). 4-aspartylphosphate is present on Asp54. Residues 152 to 342 (DVPRGRVVAV…ADRLALWLRR (191 aa)) form the CheB-type methylesterase domain. Residues Ser164, His191, and Asp285 contribute to the active site.

The protein belongs to the CheB family. In terms of processing, phosphorylated by CheA. Phosphorylation of the N-terminal regulatory domain activates the methylesterase activity.

Its subcellular location is the cytoplasm. It carries out the reaction [protein]-L-glutamate 5-O-methyl ester + H2O = L-glutamyl-[protein] + methanol + H(+). The enzyme catalyses L-glutaminyl-[protein] + H2O = L-glutamyl-[protein] + NH4(+). Functionally, involved in chemotaxis. Part of a chemotaxis signal transduction system that modulates chemotaxis in response to various stimuli. Catalyzes the demethylation of specific methylglutamate residues introduced into the chemoreceptors (methyl-accepting chemotaxis proteins or MCP) by CheR. Also mediates the irreversible deamidation of specific glutamine residues to glutamic acid. This is Protein-glutamate methylesterase/protein-glutamine glutaminase 3 from Anaeromyxobacter dehalogenans (strain 2CP-C).